Consider the following 333-residue polypeptide: Squamosa promoter-binding-like protein 8 (333 aa).

Positions 1 to 28 (MLDYEWDNPSSIVLSGDERNPDSDPTRS) are disordered. Positions 16–25 (GDERNPDSDP) are enriched in basic and acidic residues. Residues 179–269 (MANSLSTPRC…RKCHQSASAT (91 aa)) form a sufficient and necessary for DNA binding region. Residues 185–262 (TPRCQAEGCN…ADHNRRRRKC (78 aa)) form an SBP-type zinc finger. 8 residues coordinate Zn(2+): cysteine 188, cysteine 193, cysteine 210, histidine 213, cysteine 229, cysteine 232, histidine 236, and cysteine 248. The Bipartite nuclear localization signal signature appears at 245–261 (KRSCRKRLADHNRRRRK). 2 disordered regions span residues 254-303 (DHNR…TISL) and 314-333 (TASS…FSSG). Residues 264–284 (QSASATQDTGTGKTTPKSPND) are compositionally biased toward polar residues. Positions 289 to 299 (ASSSPSSNAPP) are enriched in low complexity.

It depends on Zn(2+) as a cofactor. In terms of tissue distribution, expressed in shoot apical region and early floral tissues. Transcripts levels increase in developing pollen sacs, and decrease in later stage of anther development. Strongly expressed in the placental region of the carpels.

It is found in the nucleus. It localises to the cytoplasm. In terms of biological role, trans-acting factor that binds specifically to the consensus nucleotide sequence 5'-TNCGTACAA-3'. Binds specifically to the 5'-GTAC-3' core sequence. Involved in development and floral organogenesis. Required for ovule differentiation, pollen production, filament elongation, seed formation and siliques elongation. Also seems to play a role in the formation of trichomes on sepals. May positively modulate gibberellin (GA) signaling in flower. This chain is Squamosa promoter-binding-like protein 8 (SPL8), found in Arabidopsis thaliana (Mouse-ear cress).